A 111-amino-acid chain; its full sequence is Large ribosomal subunit protein P2 (111 aa).

Residues 62–111 (LASVPSGGAGGAAAAGGAAAAGGAAEAAPEEAKEEEKEESDDDMGFGLFD) form a disordered region. The segment covering 76–88 (AGGAAAAGGAAEA) has biased composition (low complexity). Phosphoserine is present on Ser101.

The protein belongs to the eukaryotic ribosomal protein P1/P2 family. In terms of assembly, P1 and P2 exist as dimers at the large ribosomal subunit.

Plays an important role in the elongation step of protein synthesis. The chain is Large ribosomal subunit protein P2 from Podospora anserina (Pleurage anserina).